The chain runs to 154 residues: UPF0547 protein C16orf87 homolog (154 aa).

The disordered stretch occupies residues 46 to 119 (HPEKAPSSTE…KHEEEREKQE (74 aa)). Over residues 68 to 84 (VRREKINSTVNKDLENR) the composition is skewed to basic and acidic residues. Position 91 is a phosphoserine (Ser91). A coiled-coil region spans residues 104 to 132 (KSASAKKHEEEREKQEKEIDIYANLSDEK). The segment covering 109 to 119 (KKHEEEREKQE) has biased composition (basic and acidic residues).

This sequence belongs to the UPF0547 family.

The polypeptide is UPF0547 protein C16orf87 homolog (Bos taurus (Bovine)).